The chain runs to 135 residues: Small ribosomal subunit protein uS11 (135 aa).

Belongs to the universal ribosomal protein uS11 family. As to quaternary structure, part of the 30S ribosomal subunit. Interacts with proteins S7 and S18. Binds to IF-3.

Functionally, located on the platform of the 30S subunit, it bridges several disparate RNA helices of the 16S rRNA. Forms part of the Shine-Dalgarno cleft in the 70S ribosome. This chain is Small ribosomal subunit protein uS11, found in Cutibacterium acnes (strain DSM 16379 / KPA171202) (Propionibacterium acnes).